Here is a 213-residue protein sequence, read N- to C-terminus: Golgi apparatus membrane protein TVP23 homolog A (213 aa).

4 consecutive transmembrane segments (helical) span residues 32-52, 54-74, 123-143, and 150-170; these read PLAT…YVSC, WFSK…SLDF, IFWL…FSTL, and WLAL…GYIL.

This sequence belongs to the TVP23 family.

The protein resides in the membrane. In Homo sapiens (Human), this protein is Golgi apparatus membrane protein TVP23 homolog A (TVP23A).